A 369-amino-acid polypeptide reads, in one-letter code: UDP-3-O-acylglucosamine N-acyltransferase (369 aa).

Catalysis depends on His-252, which acts as the Proton acceptor. Residues 348–369 are disordered; that stretch reads ERRQRGENNAPAQNKQDEEKSS.

This sequence belongs to the transferase hexapeptide repeat family. LpxD subfamily. In terms of assembly, homotrimer.

The enzyme catalyses a UDP-3-O-[(3R)-3-hydroxyacyl]-alpha-D-glucosamine + a (3R)-hydroxyacyl-[ACP] = a UDP-2-N,3-O-bis[(3R)-3-hydroxyacyl]-alpha-D-glucosamine + holo-[ACP] + H(+). Its pathway is bacterial outer membrane biogenesis; LPS lipid A biosynthesis. In terms of biological role, catalyzes the N-acylation of UDP-3-O-acylglucosamine using 3-hydroxyacyl-ACP as the acyl donor. Is involved in the biosynthesis of lipid A, a phosphorylated glycolipid that anchors the lipopolysaccharide to the outer membrane of the cell. This is UDP-3-O-acylglucosamine N-acyltransferase from Cupriavidus metallidurans (strain ATCC 43123 / DSM 2839 / NBRC 102507 / CH34) (Ralstonia metallidurans).